The chain runs to 220 residues: MESNNVVLLDFWPSSFGMRLRIALALKGIKYEAKEENLSDKSPLLLEMNPVHKKIPILIHNSKAICESLNILEYIDEVWHDKCPLLPSDPYERSQARFWADYIDKKIYSTGRRVWSGKGEDQEEAKKEFIEILKTLEGELGNKTYFGGDNLGFVDVALVPFTSWFYSYETCANFSIEAECPKLVVWAKTCMESESVSKSLPHPHKIYGFVLELKHKLGLA.

The GST N-terminal domain occupies 4–83; it reads NNVVLLDFWP…YIDEVWHDKC (80 aa). Glutathione is bound by residues serine 14, lysine 41, isoleucine 55, and 67-68; that span reads ES. One can recognise a GST C-terminal domain in the interval 89–209; it reads DPYERSQARF…LPHPHKIYGF (121 aa).

Belongs to the GST superfamily. HSP26 family.

It carries out the reaction RX + glutathione = an S-substituted glutathione + a halide anion + H(+). The sequence is that of Probable glutathione S-transferase parA (PARA) from Nicotiana tabacum (Common tobacco).